Consider the following 174-residue polypeptide: Nucleoside-triphosphatase THEP1 (174 aa).

ATP is bound by residues 7–14 (GRPGVGKT) and 94–101 (LIIIDEIG).

It belongs to the THEP1 NTPase family.

It carries out the reaction a ribonucleoside 5'-triphosphate + H2O = a ribonucleoside 5'-diphosphate + phosphate + H(+). In terms of biological role, has nucleotide phosphatase activity towards ATP, GTP, CTP, TTP and UTP. May hydrolyze nucleoside diphosphates with lower efficiency. The protein is Nucleoside-triphosphatase THEP1 of Thermotoga sp. (strain RQ2).